The following is a 294-amino-acid chain: Enoyl-CoA hydratase domain-containing protein 3, mitochondrial (294 aa).

Residues 1–61 constitute a mitochondrion transit peptide; the sequence is MSWLRSCGER…IILNNPQQRN (61 aa).

This sequence belongs to the enoyl-CoA hydratase/isomerase family.

Its subcellular location is the mitochondrion. Its function is as follows. May play a role in fatty acid biosynthesis and insulin sensitivity. This Xenopus laevis (African clawed frog) protein is Enoyl-CoA hydratase domain-containing protein 3, mitochondrial (echdc3).